The sequence spans 407 residues: MRNVVRKPLTIGLALTLLLPMGMTATSAKNADSYAKKPHISALNAPQLDQRYKNEFTIGAAVEPYQLQNEKDVQMLKRHFNSIVAENVMKPISIQPEEGKFNFEQADRIVKFAKANGMDIRFHTLVWHSQVPQWFFLDKEGKPMVNETDPVKREQNKQLLLKRLETHIKTIVERYKDDIKYWDVVNEVVGDDGKLRNSPWYQIAGIDYIKVAFQAARKYGGDNIKLYMNDYNTEVEPKRTALYNLVKQLKEEGVPIDGIGHQSHIQIGWPSEAEIEKTINMFAALGLDNQITELDVSMYGWPPRAYPTYDAIPKQKFLDQAARYDRLFKLYEKLSDKISNVTFWGIADNHTWLDSRADVYYDANGNVVVDPNAPYAKVEKGKGKDAPFVFGPDYKVKPAYWAIIDHK.

The signal sequence occupies residues 1-28; the sequence is MRNVVRKPLTIGLALTLLLPMGMTATSA. The 365-residue stretch at 42–406 folds into the GH10 domain; sequence ALNAPQLDQR…KPAYWAIIDH (365 aa). The Proton donor role is filled by Glu-187. Glu-293 functions as the Nucleophile in the catalytic mechanism.

The protein belongs to the glycosyl hydrolase 10 (cellulase F) family.

Its subcellular location is the secreted. The enzyme catalyses Endohydrolysis of (1-&gt;4)-beta-D-xylosidic linkages in xylans.. It participates in glycan degradation; xylan degradation. The protein is Endo-1,4-beta-xylanase of Geobacillus stearothermophilus (Bacillus stearothermophilus).